The chain runs to 197 residues: NADH-quinone oxidoreductase subunit C (197 aa).

This sequence belongs to the complex I 30 kDa subunit family. In terms of assembly, NDH-1 is composed of 14 different subunits. Subunits NuoB, C, D, E, F, and G constitute the peripheral sector of the complex.

Its subcellular location is the cell inner membrane. It carries out the reaction a quinone + NADH + 5 H(+)(in) = a quinol + NAD(+) + 4 H(+)(out). Its function is as follows. NDH-1 shuttles electrons from NADH, via FMN and iron-sulfur (Fe-S) centers, to quinones in the respiratory chain. The immediate electron acceptor for the enzyme in this species is believed to be ubiquinone. Couples the redox reaction to proton translocation (for every two electrons transferred, four hydrogen ions are translocated across the cytoplasmic membrane), and thus conserves the redox energy in a proton gradient. This Rickettsia typhi (strain ATCC VR-144 / Wilmington) protein is NADH-quinone oxidoreductase subunit C.